Here is a 114-residue protein sequence, read N- to C-terminus: Secretoglobin family 2B member 2 (114 aa).

Positions 1-23 are cleaved as a signal peptide; sequence MKGTLLLLALLVTGELGFQRTEA.

This sequence belongs to the secretoglobin family. Expressed in lacrimal gland.

The protein resides in the secreted. The sequence is that of Secretoglobin family 2B member 2 (Scgb2b2) from Mus musculus (Mouse).